Here is a 198-residue protein sequence, read N- to C-terminus: MKIGILAVQGDVEEHEYAVKKAMDELGISGDVARVKRIDDLRGLSGIIIPGGESTSIWRLTSKSNLMNALRDEVSNGLPAMGTCAGAIFMAREVKDRIMGETGQGVLGIMNISVVRNFYGRQRESFETTLNIEGIGTVRAVFIRAPAIVKYWGSAKPLVAYGDNYPVVIENNMLALTFHPELTTILVHEWFISNLVKK.

52–54 contacts L-glutamine; that stretch reads GES. Cys-84 acts as the Nucleophile in catalysis. L-glutamine contacts are provided by residues Arg-116 and 143–144; that span reads IR. Residues His-179 and Glu-181 each act as charge relay system in the active site.

This sequence belongs to the glutaminase PdxT/SNO family. In terms of assembly, in the presence of PdxS, forms a dodecamer of heterodimers. Only shows activity in the heterodimer.

It catalyses the reaction aldehydo-D-ribose 5-phosphate + D-glyceraldehyde 3-phosphate + L-glutamine = pyridoxal 5'-phosphate + L-glutamate + phosphate + 3 H2O + H(+). It carries out the reaction L-glutamine + H2O = L-glutamate + NH4(+). The protein operates within cofactor biosynthesis; pyridoxal 5'-phosphate biosynthesis. In terms of biological role, catalyzes the hydrolysis of glutamine to glutamate and ammonia as part of the biosynthesis of pyridoxal 5'-phosphate. The resulting ammonia molecule is channeled to the active site of PdxS. This chain is Pyridoxal 5'-phosphate synthase subunit PdxT, found in Caldivirga maquilingensis (strain ATCC 700844 / DSM 13496 / JCM 10307 / IC-167).